A 341-amino-acid chain; its full sequence is HTH-type transcriptional repressor PurR (341 aa).

Residues 2-56 form the HTH lacI-type domain; the sequence is ATIKDVAKHAGVSTTTVSHVINKTRFVAENTKAAVWAAIKELHYSPSAVARSLKV. The segment at residues 4–23 is a DNA-binding region (H-T-H motif); the sequence is IKDVAKHAGVSTTTVSHVIN. A DNA-binding region spans residues 48–56; that stretch reads SAVARSLKV. Positions 73, 190, 192, 221, and 275 each coordinate hypoxanthine.

Homodimer.

Its pathway is purine metabolism; purine nucleotide biosynthesis [regulation]. Its function is as follows. Is the main repressor of the genes involved in the de novo synthesis of purine nucleotides, regulating purB, purC, purEK, purF, purHD, purL, purMN and guaBA expression. PurR is allosterically activated to bind its cognate DNA by binding the purine corepressors, hypoxanthine or guanine, thereby effecting transcription repression. The protein is HTH-type transcriptional repressor PurR of Yersinia pseudotuberculosis serotype O:1b (strain IP 31758).